The sequence spans 297 residues: Probable porphobilinogen deaminase (297 aa).

Position 241 is an S-(dipyrrolylmethanemethyl)cysteine (cysteine 241).

Belongs to the HMBS family. Requires dipyrromethane as cofactor.

The catalysed reaction is 4 porphobilinogen + H2O = hydroxymethylbilane + 4 NH4(+). Its pathway is porphyrin-containing compound metabolism; protoporphyrin-IX biosynthesis; coproporphyrinogen-III from 5-aminolevulinate: step 2/4. Tetrapolymerization of the monopyrrole PBG into the hydroxymethylbilane pre-uroporphyrinogen in several discrete steps. The chain is Probable porphobilinogen deaminase from Pyrobaculum arsenaticum (strain DSM 13514 / JCM 11321 / PZ6).